A 44-amino-acid chain; its full sequence is Protein PsbN (44 aa).

A helical transmembrane segment spans residues 7–29 (FFTTFLGCLLLSITGYSIYVGFG).

This sequence belongs to the PsbN family.

It is found in the plastid. Its subcellular location is the chloroplast thylakoid membrane. In terms of biological role, may play a role in photosystem I and II biogenesis. This chain is Protein PsbN, found in Pleurastrum terricola (Filamentous green alga).